Consider the following 796-residue polypeptide: MPLPGGLWWLLCCRRGFTLLHRDYGDGELSGDGDEDEDDETFELRTPSPAGGGRGSLDVTLTQPTRNGPISDRLQGWEETWSLIPDKGLPEEDPDIIVKGWLYREPRGGGARPWLLPRRAWFVLTRDSLDQFSSSGKGARRLGSLVLTSLCSVTGPERRPKETGLWSVTVSGRKHSIRLCSPRQAEAERWGVALREVIASKAPLETPTQLLLRDIQESCGDPEAVALIYRRNPILRHTSSALYAPLLPLPYEVSAPGPGYAPLREEAVRLFLALQALEGARRPGPLMQGVLQTCRDLPALQDELFLQLAKQTSGPAGPPGLPATQDPATLRYWQLLTCMSCTFRPGGAVRGHLLGHLERTEQALPDSELAEYARFIRKALGRTRGRELVPSLAEISALSRRQELLCTVHCPGAGACPVSIDSHTTAGEVARELVGRLGLARSRNAFALYEQRGAQERALAGGTLVADVLTRFENLTSEEAGLEDSPDCGWRLCLRLHGPLHPEGLSPEGHELPFLFEQAHALLLRGRPPPPEDTLRALAALRLQSLHRDFSPRGPLPLLDRLLPPPIPPREQPPCPTRRPPPSAALLAGALWSPGLAKRRAERARRGGTGRSTGSTAQVGGGGASTTAAVLGGWKRLRGMGQAEAMAAYLALAAQCPGFGAARYDVLELSTEPGGGAPQKLCLGLGAKAMSLSRPGETEPIHSVSYGHVAACQLIGPHTLALRVGDSQLLLQSPQVEEIMELVNAYLANPSPERPCRSGSSSGPPSQDLPDTSPPSQHQVLEEPQGQSGCLKQLQD.

The first 18 residues, 1–18 (MPLPGGLWWLLCCRRGFT), serve as a signal peptide directing secretion. Residues 28-71 (ELSGDGDEDEDDETFELRTPSPAGGGRGSLDVTLTQPTRNGPIS) form a disordered region. Residues 29–41 (LSGDGDEDEDDET) show a composition bias toward acidic residues. Position 30 is a phosphoserine (serine 30). Positions 59-68 (VTLTQPTRNG) are enriched in polar residues. A PH domain is found at 95 to 199 (DIIVKGWLYR…WGVALREVIA (105 aa)). The region spanning 237-399 (HTSSALYAPL…PSLAEISALS (163 aa)) is the MyTH4 domain. The FERM domain maps to 404–757 (LLCTVHCPGA…ANPSPERPCR (354 aa)). Asparagine 474 carries an N-linked (GlcNAc...) asparagine glycan. 2 disordered regions span residues 557–584 (PLLD…PPSA) and 598–625 (KRRA…GGAS). Positions 563–583 (LPPPIPPREQPPCPTRRPPPS) are enriched in pro residues. The segment covering 598 to 608 (KRRAERARRGG) has biased composition (basic residues). Arginine 638 is subject to Omega-N-methylarginine. The interval 750-796 (PSPERPCRSGSSSGPPSQDLPDTSPPSQHQVLEEPQGQSGCLKQLQD) is disordered. Residues 757–766 (RSGSSSGPPS) are compositionally biased toward low complexity. A compositionally biased stretch (polar residues) spans 774 to 796 (PPSQHQVLEEPQGQSGCLKQLQD).

This chain is Pleckstrin homology domain-containing family H member 3 (Plekhh3), found in Mus musculus (Mouse).